Consider the following 23-residue polypeptide: Acidic phospholipase A2 CHA-E6b (23 aa).

This sequence belongs to the phospholipase A2 family. Group II subfamily. D49 sub-subfamily. The cofactor is Ca(2+). In terms of processing, contains 7 disulfide bonds. In terms of tissue distribution, expressed by the venom gland.

The protein localises to the secreted. It carries out the reaction a 1,2-diacyl-sn-glycero-3-phosphocholine + H2O = a 1-acyl-sn-glycero-3-phosphocholine + a fatty acid + H(+). In terms of biological role, snake venom phospholipase A2 (PLA2) that shows high lipolytic (1200 umol/mg/min) and weak ADP-induced platelet aggregation activities. Also shows weak anticoagulant activity (IC(50) of about 1.0 uM). PLA2 catalyzes the calcium-dependent hydrolysis of the 2-acyl groups in 3-sn-phosphoglycerides. This Crotalus horridus (Timber rattlesnake) protein is Acidic phospholipase A2 CHA-E6b.